Here is a 1286-residue protein sequence, read N- to C-terminus: DNA-directed RNA polymerase subunit beta' (1286 aa).

4 residues coordinate Zn(2+): Cys66, Cys68, Cys81, and Cys84. Residues Asp527, Asp529, and Asp531 each coordinate Mg(2+). Zn(2+) contacts are provided by Cys905, Cys981, Cys988, and Cys991.

The protein belongs to the RNA polymerase beta' chain family. The RNAP catalytic core consists of 2 alpha, 1 beta, 1 beta' and 1 omega subunit. When a sigma factor is associated with the core the holoenzyme is formed, which can initiate transcription. Requires Mg(2+) as cofactor. The cofactor is Zn(2+).

It carries out the reaction RNA(n) + a ribonucleoside 5'-triphosphate = RNA(n+1) + diphosphate. Functionally, DNA-dependent RNA polymerase catalyzes the transcription of DNA into RNA using the four ribonucleoside triphosphates as substrates. In Mycoplasmoides gallisepticum (strain R(low / passage 15 / clone 2)) (Mycoplasma gallisepticum), this protein is DNA-directed RNA polymerase subunit beta'.